A 119-amino-acid chain; its full sequence is Small ribosomal subunit protein uS13m (119 aa).

This sequence belongs to the universal ribosomal protein uS13 family. In terms of assembly, part of the small ribosomal subunit.

It is found in the mitochondrion. Functionally, located at the top of the head of the small subunit, it contacts several helices of the small subunit rRNA. The chain is Small ribosomal subunit protein uS13m (RPS13) from Acanthamoeba castellanii (Amoeba).